The following is a 790-amino-acid chain: Cadherin-20 (790 aa).

An N-terminal signal peptide occupies residues 1 to 25 (MSCKRSYHRHCALVYYMVLLDLTNA). Positions 26-52 (VFEFSHPLIRDSGNSQSRQLLHHRLKR) are excised as a propeptide. The Extracellular segment spans residues 26–612 (VFEFSHPLIR…PYTLPISLSR (587 aa)). Cadherin domains are found at residues 54–158 (WVWN…EPKF), 159–267 (LDGP…PPRF), 268–382 (PQKH…PPVF), 383–487 (GSSF…APTF), and 487–605 (FTKF…EPYT). Residues N254, N283, N413, N454, and N535 are each glycosylated (N-linked (GlcNAc...) asparagine). A helical transmembrane segment spans residues 613-633 (GALIAILTCIFVLLVLVLLIL). Topologically, residues 634 to 790 (SMRRHRKQPY…YGTKDNNGSL (157 aa)) are cytoplasmic.

As to expression, detected in embryonic posterior neural plate, embryonic neural tube, sulcus limitans and embryonic kidney.

The protein localises to the cell membrane. Functionally, cadherins are calcium-dependent cell adhesion proteins. They preferentially interact with themselves in a homophilic manner in connecting cells; cadherins may thus contribute to the sorting of heterogeneous cell types. The sequence is that of Cadherin-20 (cdh20) from Xenopus laevis (African clawed frog).